Consider the following 374-residue polypeptide: tRNA N6-adenosine threonylcarbamoyltransferase (374 aa).

H117 and H121 together coordinate Fe cation. Substrate contacts are provided by residues 140–144 (LVSGG), D174, G187, D191, and N283. Position 311 (D311) interacts with Fe cation. Positions 337-352 (ADSSLPVTEPHVPGQG) are enriched in low complexity. The disordered stretch occupies residues 337–374 (ADSSLPVTEPHVPGQGHPHGHPHGHDHVHEVSKENLYS). Positions 359–374 (HGHDHVHEVSKENLYS) are enriched in basic and acidic residues.

Belongs to the KAE1 / TsaD family. The cofactor is Fe(2+).

The protein resides in the cytoplasm. It catalyses the reaction L-threonylcarbamoyladenylate + adenosine(37) in tRNA = N(6)-L-threonylcarbamoyladenosine(37) in tRNA + AMP + H(+). Its function is as follows. Required for the formation of a threonylcarbamoyl group on adenosine at position 37 (t(6)A37) in tRNAs that read codons beginning with adenine. Is involved in the transfer of the threonylcarbamoyl moiety of threonylcarbamoyl-AMP (TC-AMP) to the N6 group of A37, together with TsaE and TsaB. TsaD likely plays a direct catalytic role in this reaction. The chain is tRNA N6-adenosine threonylcarbamoyltransferase from Streptomyces coelicolor (strain ATCC BAA-471 / A3(2) / M145).